Reading from the N-terminus, the 336-residue chain is Phosphate acyltransferase (336 aa).

The protein belongs to the PlsX family. In terms of assembly, homodimer. Probably interacts with PlsY.

The protein localises to the cytoplasm. The enzyme catalyses a fatty acyl-[ACP] + phosphate = an acyl phosphate + holo-[ACP]. It participates in lipid metabolism; phospholipid metabolism. Functionally, catalyzes the reversible formation of acyl-phosphate (acyl-PO(4)) from acyl-[acyl-carrier-protein] (acyl-ACP). This enzyme utilizes acyl-ACP as fatty acyl donor, but not acyl-CoA. The chain is Phosphate acyltransferase from Pseudomonas putida (strain ATCC 700007 / DSM 6899 / JCM 31910 / BCRC 17059 / LMG 24140 / F1).